A 299-amino-acid chain; its full sequence is uncharacterized protein (299 aa).

This is an uncharacterized protein from Acanthamoeba polyphaga mimivirus (APMV).